We begin with the raw amino-acid sequence, 205 residues long: UPF0111 protein YkaA (205 aa).

Belongs to the UPF0111 family.

This Bacillus subtilis (strain 168) protein is UPF0111 protein YkaA (ykaA).